The chain runs to 295 residues: ATP synthase gamma chain (295 aa).

This sequence belongs to the ATPase gamma chain family. F-type ATPases have 2 components, CF(1) - the catalytic core - and CF(0) - the membrane proton channel. CF(1) has five subunits: alpha(3), beta(3), gamma(1), delta(1), epsilon(1). CF(0) has three main subunits: a, b and c.

Its subcellular location is the cell inner membrane. Produces ATP from ADP in the presence of a proton gradient across the membrane. The gamma chain is believed to be important in regulating ATPase activity and the flow of protons through the CF(0) complex. The protein is ATP synthase gamma chain of Sulfurimonas denitrificans (strain ATCC 33889 / DSM 1251) (Thiomicrospira denitrificans (strain ATCC 33889 / DSM 1251)).